A 24-amino-acid polypeptide reads, in one-letter code: Brevinin-1PTa (24 aa).

A disulfide bond links C18 and C24.

Expressed by the skin glands.

Its subcellular location is the secreted. In terms of biological role, has antibacterial activity against the Gram-positive bacterium S.aureus ATCC 25923 (MIC=3 uM) and the Gram-negative bacterium E.coli ATCC 25726 (MIC=24 uM). This chain is Brevinin-1PTa, found in Pulchrana picturata (Malaysian fire frog).